The chain runs to 142 residues: Large ribosomal subunit protein bL17 (142 aa).

It belongs to the bacterial ribosomal protein bL17 family. In terms of assembly, part of the 50S ribosomal subunit. Contacts protein L32.

This is Large ribosomal subunit protein bL17 from Chlamydia caviae (strain ATCC VR-813 / DSM 19441 / 03DC25 / GPIC) (Chlamydophila caviae).